We begin with the raw amino-acid sequence, 150 residues long: Single-stranded DNA-binding protein 1 (150 aa).

The SSB domain occupies 1 to 104 (MINNVVLVGR…VVADTFQMLE (104 aa)). Positions 103 to 120 (LESNKTQGQQTSKPQAQN) are enriched in polar residues. Positions 103–150 (LESNKTQGQQTSKPQAQNKKPQAPDPFKAPAADPFAGGTEISDDDLPF) are disordered. A compositionally biased stretch (low complexity) spans 121–138 (KKPQAPDPFKAPAADPFA). The Important for interaction with partner proteins signature appears at 145 to 150 (DDDLPF).

In terms of assembly, homotetramer.

Plays an important role in DNA replication, recombination and repair. Binds to ssDNA and to an array of partner proteins to recruit them to their sites of action during DNA metabolism. The chain is Single-stranded DNA-binding protein 1 (ssb1) from Lactococcus lactis subsp. lactis (strain IL1403) (Streptococcus lactis).